The primary structure comprises 130 residues: UPF0251 protein MmarC5_0986 (130 aa).

It belongs to the UPF0251 family.

This is UPF0251 protein MmarC5_0986 from Methanococcus maripaludis (strain C5 / ATCC BAA-1333).